Here is a 243-residue protein sequence, read N- to C-terminus: Outer membrane protein A (243 aa).

5 beta stranded membrane passes run 1–8 (LAAKLSYP), 13–21 (LDIYTRLGG), 48–57 (PLAAVGVEYA), 62–69 (WATRLDYQ), and 88–96 (MLSLGVSYR). Repeat copies occupy residues 104-105 (AP), 106-107 (AP), 108-109 (AP), 110-111 (AP), and 112-113 (AP). The segment at 104 to 113 (APAPAPAPAP) is 5 X 2 AA tandem repeats of A-P. In terms of domain architecture, OmpA-like spans 115–243 (VETKLFTLKS…RRVEIEVKGI (129 aa)). A disulfide bridge links C215 with C229.

This sequence belongs to the outer membrane OOP (TC 1.B.6) superfamily. OmpA family. Monomer and homodimer.

Its subcellular location is the cell outer membrane. In terms of biological role, with TolR probably plays a role in maintaining the position of the peptidoglycan cell wall in the periplasm. Acts as a porin with low permeability that allows slow penetration of small solutes; an internal gate slows down solute passage. In Serratia odorifera, this protein is Outer membrane protein A.